We begin with the raw amino-acid sequence, 426 residues long: 3-phosphoshikimate 1-carboxyvinyltransferase (426 aa).

3-phosphoshikimate contacts are provided by Lys-22, Ser-23, and Arg-27. Residue Lys-22 participates in phosphoenolpyruvate binding. 2 residues coordinate phosphoenolpyruvate: Gly-96 and Arg-124. 3-phosphoshikimate is bound by residues Ser-170, Ser-171, Gln-172, Ser-198, Asp-314, Asn-337, and Lys-341. Residue Gln-172 coordinates phosphoenolpyruvate. Residue Asp-314 is the Proton acceptor of the active site. Residues Arg-345, Arg-387, and Lys-412 each contribute to the phosphoenolpyruvate site.

The protein belongs to the EPSP synthase family. As to quaternary structure, monomer.

It localises to the cytoplasm. It carries out the reaction 3-phosphoshikimate + phosphoenolpyruvate = 5-O-(1-carboxyvinyl)-3-phosphoshikimate + phosphate. It functions in the pathway metabolic intermediate biosynthesis; chorismate biosynthesis; chorismate from D-erythrose 4-phosphate and phosphoenolpyruvate: step 6/7. Catalyzes the transfer of the enolpyruvyl moiety of phosphoenolpyruvate (PEP) to the 5-hydroxyl of shikimate-3-phosphate (S3P) to produce enolpyruvyl shikimate-3-phosphate and inorganic phosphate. The polypeptide is 3-phosphoshikimate 1-carboxyvinyltransferase (Shewanella woodyi (strain ATCC 51908 / MS32)).